The following is a 256-amino-acid chain: MLWQKPTAPEQAPAPPRPYQGVRVKEPVKELLRRKRGHASSGASVTPTAVVLPHQPLATYTTVGPSCLDMEVSASTVTEEGALCAGWLSQPAPAALQPLAPWTPYTEYVSHEAVSCPYSADMYVQPVCPSYTVVGPSSVLTYASQPLITNVTTRSAAAPTVGPPLEGPEHQAPLTYFPWPQPLSTLPTSTLQYQPPAPALPGPQFVQLPISIPEPVLPDAEDPRRAIGSLTIDKLLLEEEDSDTYALNHTLSVEGF.

The segment at 1 to 23 is disordered; that stretch reads MLWQKPTAPEQAPAPPRPYQGVR. The OCA domain maps to 16 to 38; sequence PRPYQGVRVKEPVKELLRRKRGH.

This sequence belongs to the POU2AF family. In terms of assembly, interacts with POU2F1/OCT1 and POU2F2/OCT2; the interaction increases POU2F1 and POU2F2 transactivation activity. Post-translationally, ubiquitinated; mediated by SIAH1 or SIAH2 and leading to its subsequent proteasomal degradation.

Its subcellular location is the nucleus. Functionally, transcriptional coactivator that specifically associates with either POU2F1/OCT1 or POU2F2/OCT2. It boosts the POU2F1/OCT1 mediated promoter activity and to a lesser extent, that of POU2F2/OCT2. It recognizes the POU domains of POU2F1/OCT1 and POU2F2/OCT2. It is essential for the response of B-cells to antigens and required for the formation of germinal centers. Regulates IL6 expression in B cells as POU2F2/OCT2 coactivator. This is POU domain class 2-associating factor 1 (POU2AF1) from Bos taurus (Bovine).